The primary structure comprises 146 residues: Hemoglobin subunit beta (146 aa).

The residue at position 1 (Val1) is an N-acetylvaline. Positions 2 to 146 (HLTAEEKSAV…VANALAHKYH (145 aa)) constitute a Globin domain. The residue at position 12 (Thr12) is a Phosphothreonine. Phosphoserine is present on Ser44. At Lys59 the chain carries N6-acetyllysine. His63 lines the heme b pocket. An N6-acetyllysine modification is found at Lys82. His92 is a heme b binding site. Cys93 carries the S-nitrosocysteine modification. An N6-acetyllysine modification is found at Lys144.

It belongs to the globin family. As to quaternary structure, heterotetramer of two alpha chains and two beta chains. In terms of tissue distribution, red blood cells.

Its function is as follows. Involved in oxygen transport from the lung to the various peripheral tissues. In Meles meles (Eurasian badger), this protein is Hemoglobin subunit beta (HBB).